The chain runs to 245 residues: Phosphoadenosine 5'-phosphosulfate reductase (245 aa).

Residue C239 is the Nucleophile; cysteine thiosulfonate intermediate of the active site.

It belongs to the PAPS reductase family. CysH subfamily.

The protein localises to the cytoplasm. The catalysed reaction is [thioredoxin]-disulfide + sulfite + adenosine 3',5'-bisphosphate + 2 H(+) = [thioredoxin]-dithiol + 3'-phosphoadenylyl sulfate. It participates in sulfur metabolism; hydrogen sulfide biosynthesis; sulfite from sulfate: step 3/3. In terms of biological role, catalyzes the formation of sulfite from phosphoadenosine 5'-phosphosulfate (PAPS) using thioredoxin as an electron donor. The chain is Phosphoadenosine 5'-phosphosulfate reductase from Shewanella oneidensis (strain ATCC 700550 / JCM 31522 / CIP 106686 / LMG 19005 / NCIMB 14063 / MR-1).